A 410-amino-acid polypeptide reads, in one-letter code: 2-oxoisovalerate dehydrogenase subunit alpha (410 aa).

Belongs to the BCKDHA family. Heterodimer of an alpha and a beta chain. The cofactor is thiamine diphosphate.

The enzyme catalyses N(6)-[(R)-lipoyl]-L-lysyl-[protein] + 3-methyl-2-oxobutanoate + H(+) = N(6)-[(R)-S(8)-2-methylpropanoyldihydrolipoyl]-L-lysyl-[protein] + CO2. Functionally, the branched-chain alpha-keto dehydrogenase complex catalyzes the overall conversion of alpha-keto acids to acyl-CoA and CO(2). It contains multiple copies of three enzymatic components: branched-chain alpha-keto acid decarboxylase (E1), lipoamide acyltransferase (E2) and lipoamide dehydrogenase (E3). This Pseudomonas aeruginosa (strain ATCC 15692 / DSM 22644 / CIP 104116 / JCM 14847 / LMG 12228 / 1C / PRS 101 / PAO1) protein is 2-oxoisovalerate dehydrogenase subunit alpha (bkdA1).